The following is a 165-amino-acid chain: Small ribosomal subunit protein uS5 (165 aa).

The 64-residue stretch at leucine 13 to isoleucine 76 folds into the S5 DRBM domain.

This sequence belongs to the universal ribosomal protein uS5 family. In terms of assembly, part of the 30S ribosomal subunit. Contacts proteins S4 and S8.

With S4 and S12 plays an important role in translational accuracy. Its function is as follows. Located at the back of the 30S subunit body where it stabilizes the conformation of the head with respect to the body. The protein is Small ribosomal subunit protein uS5 of Chlamydia muridarum (strain MoPn / Nigg).